The sequence spans 500 residues: NAD(P)H-quinone oxidoreductase subunit 2 B, chloroplastic (500 aa).

13 consecutive transmembrane segments (helical) span residues 14–34 (SILP…IDLT), 41–61 (WLYF…LFQL), 78–98 (FNGI…PLSM), 116–136 (LTAT…IIFI), 166–186 (LLMG…LYGL), 211–231 (ISIV…LVPF), 242–262 (APTS…LALA), 277–297 (WHLI…FIAI), 305–325 (MLAY…IAGD), 335–355 (YMLF…LFGL), 376–396 (ASFL…AGFF), 409–429 (GLYL…YYYL), and 467–487 (IIIC…VIAI).

This sequence belongs to the complex I subunit 2 family. As to quaternary structure, NDH is composed of at least 16 different subunits, 5 of which are encoded in the nucleus.

It is found in the plastid. It localises to the chloroplast thylakoid membrane. It catalyses the reaction a plastoquinone + NADH + (n+1) H(+)(in) = a plastoquinol + NAD(+) + n H(+)(out). The catalysed reaction is a plastoquinone + NADPH + (n+1) H(+)(in) = a plastoquinol + NADP(+) + n H(+)(out). Functionally, NDH shuttles electrons from NAD(P)H:plastoquinone, via FMN and iron-sulfur (Fe-S) centers, to quinones in the photosynthetic chain and possibly in a chloroplast respiratory chain. The immediate electron acceptor for the enzyme in this species is believed to be plastoquinone. Couples the redox reaction to proton translocation, and thus conserves the redox energy in a proton gradient. The polypeptide is NAD(P)H-quinone oxidoreductase subunit 2 B, chloroplastic (Anthoceros angustus (Hornwort)).